Reading from the N-terminus, the 87-residue chain is Acyl-CoA-binding protein 2 (87 aa).

An ACB domain is found at 2–87 (VSQLFEEKAK…VDNLIAKYSS (86 aa)). An acyl-CoA is bound by residues 29–33 (YGLYK), K51, K55, and Y74.

It belongs to the ACBP family.

Functionally, binds medium- and long-chain acyl-CoA esters with very high affinity and may function as an intracellular carrier of acyl-CoA esters. This chain is Acyl-CoA-binding protein 2 (ACB2), found in Saccharomyces pastorianus (strain ATCC 76670 / Carlsberg bottom yeast no.2 / CBS 1503 / CLIB 180 / NBRC 10610 / NRRL Y-1525) (Saaz-type lager yeast).